Consider the following 264-residue polypeptide: Small ribosomal subunit protein uS2 (264 aa).

Residues 243–253 (IEAAEDGEEVD) show a composition bias toward acidic residues. The segment at 243–264 (IEAAEDGEEVDNAQLTSSQGRS) is disordered. Polar residues predominate over residues 255-264 (AQLTSSQGRS).

It belongs to the universal ribosomal protein uS2 family.

In Deinococcus geothermalis (strain DSM 11300 / CIP 105573 / AG-3a), this protein is Small ribosomal subunit protein uS2.